Here is a 522-residue protein sequence, read N- to C-terminus: Putative zinc finger protein 286B (522 aa).

Positions Met1–Gly30 are disordered. 10 C2H2-type zinc fingers span residues His244 to His266, Tyr272 to His294, Phe299 to His321, Tyr327 to His349, Tyr355 to His377, Tyr383 to His405, Tyr411 to His433, Tyr439 to His461, Tyr467 to His489, and Phe495 to His517.

The protein belongs to the krueppel C2H2-type zinc-finger protein family.

It is found in the nucleus. May be involved in transcriptional regulation. The protein is Putative zinc finger protein 286B (ZNF286B) of Homo sapiens (Human).